The following is a 324-amino-acid chain: Elongation factor P--(R)-beta-lysine ligase (324 aa).

Substrate is bound at residue 75 to 77 (SPE). ATP is bound by residues 99 to 101 (RNK) and Asn-108. Tyr-117 contributes to the substrate binding site. Residue 243 to 244 (EL) participates in ATP binding. Substrate is bound at residue Glu-250. ATP is bound at residue Gly-299.

Belongs to the class-II aminoacyl-tRNA synthetase family. EpmA subfamily. Homodimer.

The catalysed reaction is D-beta-lysine + L-lysyl-[protein] + ATP = N(6)-((3R)-3,6-diaminohexanoyl)-L-lysyl-[protein] + AMP + diphosphate + H(+). In terms of biological role, with EpmB is involved in the beta-lysylation step of the post-translational modification of translation elongation factor P (EF-P). Catalyzes the ATP-dependent activation of (R)-beta-lysine produced by EpmB, forming a lysyl-adenylate, from which the beta-lysyl moiety is then transferred to the epsilon-amino group of a conserved specific lysine residue in EF-P. The sequence is that of Elongation factor P--(R)-beta-lysine ligase from Buchnera aphidicola subsp. Acyrthosiphon pisum (strain 5A).